The chain runs to 294 residues: Non-selective voltage-gated ion channel VDAC2 (294 aa).

An N-acetylalanine modification is found at Ala-2. Residues Lys-23 and Lys-31 each contribute to the ATP site. Lys-31 carries the post-translational modification N6-acetyllysine; alternate. At Lys-31 the chain carries N6-succinyllysine; alternate. A Glycyl lysine isopeptide (Lys-Gly) (interchain with G-Cter in ubiquitin); alternate cross-link involves residue Lys-31. Beta stranded transmembrane passes span 37–46 and 50–58; these read LVKLDVKTKS and VEFSTSGSS. A Glycyl lysine isopeptide (Lys-Gly) (interchain with G-Cter in ubiquitin) cross-link involves residue Lys-64. A beta stranded membrane pass occupies residues 65 to 75; sequence VTGTLETKYKW. Tyr-78 is subject to Phosphotyrosine. 3 beta stranded membrane passes run 80-87, 91-100, and 106-115; these read LTFTEKWN, TLGTEIAIED, and LKLTFDTTFS. Thr-118 bears the Phosphothreonine mark. Lys-120 carries the N6-acetyllysine; alternate modification. Residue Lys-120 forms a Glycyl lysine isopeptide (Lys-Gly) (interchain with G-Cter in ubiquitin); alternate linkage. Lys-121 participates in a covalent cross-link: Glycyl lysine isopeptide (Lys-Gly) (interchain with G-Cter in ubiquitin). 4 beta stranded membrane passes run 122-131, 134-141, 148-156, and 161-169; these read SGKIKSSYKR, INLGCDVD, AIHGSAVFG, and LAGYQMTFD. Residue Lys-172 forms a Glycyl lysine isopeptide (Lys-Gly) (interchain with G-Cter in ubiquitin) linkage. 6 consecutive transmembrane segments (beta stranded) span residues 174–186, 189–196, 200–209, 213–222, 229–238, and 242–249; these read KLTR…GYRT, FQLHTNVN, EFGGSIYQKV, LDTSVNLAWT, RFGIAAKYQL, and ASISAKVN. The residue at position 251 (Ser-251) is a Phosphoserine. NAD(+) is bound by residues 253-255 and 271-275; these read LIG and SALVD. 2 beta stranded membrane-spanning segments follow: residues 253–262 and 265–274; these read LIGVGYTQTL and GVKLTLSALV. At Lys-277 the chain carries N6-acetyllysine; alternate. A Glycyl lysine isopeptide (Lys-Gly) (interchain with G-Cter in ubiquitin); alternate cross-link involves residue Lys-277. Residues 284 to 293 traverse the membrane as a beta stranded segment; that stretch reads HKLGLALELE.

Belongs to the eukaryotic mitochondrial porin family. As to quaternary structure, monomer, homodimer and higher order oligomers; formation of higher order structures is necessary for scramblase activity. Interacts with ARMC12 in a TBC1D21-dependent manner. Interacts with KLC3. Interacts with SPATA33. Interacts with PPP3CC in a SPATA33-dependent manner. Ubiquitinated by PRKN during mitophagy, leading to its degradation and enhancement of mitophagy. Deubiquitinated by USP30.

It is found in the mitochondrion outer membrane. The protein resides in the membrane. It catalyses the reaction chloride(in) = chloride(out). The catalysed reaction is K(+)(in) = K(+)(out). It carries out the reaction a 1,2-diacyl-sn-glycero-3-phospho-L-serine(in) = a 1,2-diacyl-sn-glycero-3-phospho-L-serine(out). The enzyme catalyses a 1,2-diacyl-sn-glycero-3-phosphocholine(in) = a 1,2-diacyl-sn-glycero-3-phosphocholine(out). It catalyses the reaction a 1,2-diacyl-sn-glycero-3-phospho-(1D-myo-inositol)(in) = a 1,2-diacyl-sn-glycero-3-phospho-(1D-myo-inositol)(out). Functionally, non-selective voltage-gated ion channel that mediates the transport of anions and cations through the mitochondrion outer membrane and plasma membrane. The channel adopts an open conformation at zero mV and a closed conformation at both positive and negative potentials. There are two populations of channels; the main that functions in a lower open-state conductance with lower ion selectivity, that switch, in a voltage-dependent manner, from the open to a low-conducting 'closed' state and the other that has a normal ion selectivity in the typical high conductance, 'open' state. Binds various lipids, including the sphingolipid ceramide, the phospholipid phosphatidylcholine, and the sterols cholesterol and oxysterol. Binding of ceramide promotes the mitochondrial outer membrane permeabilization (MOMP) apoptotic pathway. In terms of biological role, catalyzes the scrambling of phospholipids across the outer mitochondrial membrane; the mechanism is unrelated to channel activity and is capable of translocating both anionic and zwitterionic phospholipids. This Bos taurus (Bovine) protein is Non-selective voltage-gated ion channel VDAC2.